Here is a 337-residue protein sequence, read N- to C-terminus: 1-aminocyclopropane-1-carboxylate deaminase (337 aa).

Residue Lys-50 is modified to N6-(pyridoxal phosphate)lysine. Residue Ser-77 is the Nucleophile of the active site.

This sequence belongs to the ACC deaminase/D-cysteine desulfhydrase family. Homotrimer. Pyridoxal 5'-phosphate serves as cofactor.

It carries out the reaction 1-aminocyclopropane-1-carboxylate + H2O = 2-oxobutanoate + NH4(+). Its function is as follows. Catalyzes a cyclopropane ring-opening reaction, the irreversible conversion of 1-aminocyclopropane-1-carboxylate (ACC) to ammonia and alpha-ketobutyrate. Allows growth on ACC as a nitrogen source. The polypeptide is 1-aminocyclopropane-1-carboxylate deaminase (Rhizobium rhizogenes (strain K84 / ATCC BAA-868) (Agrobacterium radiobacter)).